The following is a 125-amino-acid chain: MRLIYSALVTAAAMVAISNGSTPARGNEVETRSLRGGNEVDSSMSDDGERAARGGGRVRSQASGVTRHVGGGGPFIGFWYPYYNFEEKKEKKEKHHLSDEYEEYRRIAAEVKRKRQDKRLAERQD.

An N-terminal signal peptide occupies residues 1–26 (MRLIYSALVTAAAMVAISNGSTPARG). The tract at residues 21–66 (STPARGNEVETRSLRGGNEVDSSMSDDGERAARGGGRVRSQASGVT) is disordered. Positions 32-50 (RSLRGGNEVDSSMSDDGER) match the RxLR-dEER motif.

This sequence belongs to the RxLR effector family.

The protein resides in the secreted. Its subcellular location is the host nucleus. In terms of biological role, effector that acts as a broad suppressor of cell death to interrupt plant immunity. Inhibits cell death induced by cell death-inducing proteins, including the PAMP elicitor INF1 from P.infestans. This chain is Secreted RxLR effector protein 22, found in Plasmopara viticola (Downy mildew of grapevine).